Consider the following 213-residue polypeptide: MTDKAHQCVIIGIAGASASGKSLIASTLYRELREQVGDQHIGVIPEDGYYKDQSHLSMEERVKTNYDHPSAMDHNLLLEHLQALKAGKPVELPLYSYTEHTRKKETVHLEPKKVIILEGILLLTDIRLRQEMNFSIFVDTPLDICLMRRMKRDVNERGRSMDSVMAQYQKTVRPMFLQFIEPSKQYADIIVPRGGKNRIAIDILKAKISQFFE.

ATP is bound at residue 15-22 (GASASGKS).

Belongs to the uridine kinase family.

The protein resides in the cytoplasm. It catalyses the reaction uridine + ATP = UMP + ADP + H(+). It carries out the reaction cytidine + ATP = CMP + ADP + H(+). Its pathway is pyrimidine metabolism; CTP biosynthesis via salvage pathway; CTP from cytidine: step 1/3. The protein operates within pyrimidine metabolism; UMP biosynthesis via salvage pathway; UMP from uridine: step 1/1. This Yersinia pseudotuberculosis serotype O:1b (strain IP 31758) protein is Uridine kinase.